A 270-amino-acid polypeptide reads, in one-letter code: Glucosamine-6-phosphate deaminase (270 aa).

The active-site Proton acceptor; for enolization step is the Asp-72. Asp-141 acts as the For ring-opening step in catalysis. The active-site Proton acceptor; for ring-opening step is the His-143. The active-site For ring-opening step is Glu-148.

This sequence belongs to the glucosamine/galactosamine-6-phosphate isomerase family. NagB subfamily.

The enzyme catalyses alpha-D-glucosamine 6-phosphate + H2O = beta-D-fructose 6-phosphate + NH4(+). Its pathway is amino-sugar metabolism; N-acetylneuraminate degradation; D-fructose 6-phosphate from N-acetylneuraminate: step 5/5. With respect to regulation, allosterically activated by N-acetylglucosamine 6-phosphate (GlcNAc6P). In terms of biological role, catalyzes the reversible isomerization-deamination of glucosamine 6-phosphate (GlcN6P) to form fructose 6-phosphate (Fru6P) and ammonium ion. The chain is Glucosamine-6-phosphate deaminase from Treponema denticola (strain ATCC 35405 / DSM 14222 / CIP 103919 / JCM 8153 / KCTC 15104).